The chain runs to 127 residues: UPF0325 protein VP2321 (127 aa).

The protein belongs to the UPF0325 family.

The sequence is that of UPF0325 protein VP2321 from Vibrio parahaemolyticus serotype O3:K6 (strain RIMD 2210633).